The following is a 500-amino-acid chain: Maturase K (500 aa).

The protein belongs to the intron maturase 2 family. MatK subfamily.

Its subcellular location is the plastid. It is found in the chloroplast. In terms of biological role, usually encoded in the trnK tRNA gene intron. Probably assists in splicing its own and other chloroplast group II introns. This chain is Maturase K, found in Prunus laurocerasus (Cherry laurel).